Here is a 664-residue protein sequence, read N- to C-terminus: Macoilin (664 aa).

Helical transmembrane passes span 28-48, 75-95, 120-140, and 154-174; these read TFLYLKFLVVWALVLLADFVL, AFSVFFVCVAFTSNIICLLFI, VCLPTVSLWILFVYIEAAIRF, and FAAHCIGYPVVTLGFGFKSYV. Residues 253-265 are compositionally biased toward basic and acidic residues; that stretch reads REKGKEKDKDAKK. The segment at 253 to 274 is disordered; the sequence is REKGKEKDKDAKKHNLGINNNN. Ser-305 carries the phosphoserine modification. The span at 320 to 348 shows a compositional bias: polar residues; that stretch reads KNYKNASGVVNSSPRSHSATNGSIPSSSS. The tract at residues 320–367 is disordered; it reads KNYKNASGVVNSSPRSHSATNGSIPSSSSKNEKKQKCTSKSPSAHKDL. A glycan (N-linked (GlcNAc...) asparagine) is linked at Asn-324. Phosphoserine is present on Ser-332. Residues Asn-340 and Asn-452 are each glycosylated (N-linked (GlcNAc...) asparagine). 2 positions are modified to phosphoserine: Ser-631 and Ser-634. Positions 631–664 are disordered; sequence SPLSPVSPHYSSKFVETSPSGLDPNASVYQPLKK. A glycan (N-linked (GlcNAc...) asparagine) is linked at Asn-655.

It belongs to the macoilin family.

The protein resides in the rough endoplasmic reticulum membrane. It localises to the nucleus membrane. Its function is as follows. Plays a role in the regulation of neuronal activity. The sequence is that of Macoilin (MACO1) from Bos taurus (Bovine).